Reading from the N-terminus, the 303-residue chain is Quinolinate synthase (303 aa).

The iminosuccinate site is built by His24 and Ser41. Position 86 (Cys86) interacts with [4Fe-4S] cluster. Iminosuccinate-binding positions include 112–114 (YVN) and Ser129. Cys172 contacts [4Fe-4S] cluster. Residues 198–200 (HPE) and Thr215 contribute to the iminosuccinate site. Cys260 serves as a coordination point for [4Fe-4S] cluster.

The protein belongs to the quinolinate synthase family. Type 2 subfamily. It depends on [4Fe-4S] cluster as a cofactor.

The protein resides in the cytoplasm. It catalyses the reaction iminosuccinate + dihydroxyacetone phosphate = quinolinate + phosphate + 2 H2O + H(+). It functions in the pathway cofactor biosynthesis; NAD(+) biosynthesis; quinolinate from iminoaspartate: step 1/1. Its function is as follows. Catalyzes the condensation of iminoaspartate with dihydroxyacetone phosphate to form quinolinate. In Clostridium kluyveri (strain NBRC 12016), this protein is Quinolinate synthase.